Here is a 484-residue protein sequence, read N- to C-terminus: Tyramine receptor 1 (484 aa).

At 1 to 54 (MVRVELQAASLMNGSSAAEEPQDALVGGDACGGRRPPSVLGVRLAVPEWEVAVT) the chain is on the extracellular side. N13 is a glycosylation site (N-linked (GlcNAc...) asparagine). Residues 55-77 (AVSLSLIILITIVGNVLVVLSVF) traverse the membrane as a helical segment. Topologically, residues 78-87 (TYKPLRIVQN) are cytoplasmic. A helical transmembrane segment spans residues 88 to 109 (FFIVSLAVADLTVAVLVMPFNV). The Extracellular segment spans residues 110–126 (AYSLIQRWVFGIVVCKM). A disulfide bridge links C124 with C203. The chain crosses the membrane as a helical span at residues 127 to 147 (WLTCDVLCCTASILNLCAIAL). Residues 148-167 (DRYWAITDPINYAQKRTLRR) are Cytoplasmic-facing. The helical transmembrane segment at 168–190 (VLAMIAGVWLLSGVISSPPLIGW) threads the bilayer. The Extracellular portion of the chain corresponds to 191-215 (NDWPMEFNDTTPCQLTEEQGYVIYS). N198 carries N-linked (GlcNAc...) asparagine glycosylation. The chain crosses the membrane as a helical span at residues 216–237 (SLGSFFIPLFIMTIVYVEIFIA). At 238–411 (TKRRLRERAK…LSKERRAART (174 aa)) the chain is on the cytoplasmic side. A compositionally biased stretch (polar residues) spans 253–280 (SAMKQQMAAQAVPSSVPSHDQESVSSET). Disordered regions lie at residues 253–322 (SAMK…PAMV) and 358–383 (TTTAVTDSPRSRTASQKGSTAPPTPV). Over residues 295–306 (EKRRKTKKKSKK) the composition is skewed to basic residues. A compositionally biased stretch (polar residues) spans 361 to 378 (AVTDSPRSRTASQKGSTA). The helical transmembrane segment at 412-433 (LGIIMGVFVVCWLPFFLMYVIV) threads the bilayer. At 434–448 (PFCNPSCKPSPKLVN) the chain is on the extracellular side. A helical transmembrane segment spans residues 449-470 (FITWLGYINSALNPIIYTIFNL). Topologically, residues 471–484 (DFRRAFKKLLHFKT) are cytoplasmic.

Belongs to the G-protein coupled receptor 1 family. As to expression, present mainly in the central nervous system, especially in the supra- and subesophageal, thoracic and abdominal ganglia. Not found in the distal part of optic lobes.

The protein resides in the cell membrane. G-protein coupled receptor for tyramine, a known neurotransmitter and neuromodulator and direct precursor of octopamine. The rank order of potency for agonists of this receptor is tyramine &gt; naphazoline &gt; tolazoline &gt; DL-octopamine &gt; dopamine &gt; epinephrine &gt; 5-hydroxytryptamine. For antagonists, the rank order is yohimbine &gt; chlorpromazine &gt; mianserin &gt; phentolamine &gt; metoclopramide. This chain is Tyramine receptor 1 (GCR1), found in Locusta migratoria (Migratory locust).